A 481-amino-acid chain; its full sequence is Argininosuccinate lyase (481 aa).

The protein belongs to the lyase 1 family. Argininosuccinate lyase subfamily.

The protein resides in the cytoplasm. The enzyme catalyses 2-(N(omega)-L-arginino)succinate = fumarate + L-arginine. It functions in the pathway amino-acid biosynthesis; L-arginine biosynthesis; L-arginine from L-ornithine and carbamoyl phosphate: step 3/3. This chain is Argininosuccinate lyase, found in Methanococcus maripaludis (strain C5 / ATCC BAA-1333).